The primary structure comprises 299 residues: Phosphoribosylaminoimidazole-succinocarboxamide synthase (299 aa).

It belongs to the SAICAR synthetase family.

It catalyses the reaction 5-amino-1-(5-phospho-D-ribosyl)imidazole-4-carboxylate + L-aspartate + ATP = (2S)-2-[5-amino-1-(5-phospho-beta-D-ribosyl)imidazole-4-carboxamido]succinate + ADP + phosphate + 2 H(+). It participates in purine metabolism; IMP biosynthesis via de novo pathway; 5-amino-1-(5-phospho-D-ribosyl)imidazole-4-carboxamide from 5-amino-1-(5-phospho-D-ribosyl)imidazole-4-carboxylate: step 1/2. This Schizosaccharomyces pombe (strain 972 / ATCC 24843) (Fission yeast) protein is Phosphoribosylaminoimidazole-succinocarboxamide synthase (ade7).